A 324-amino-acid chain; its full sequence is Protease HtpX homolog (324 aa).

The next 2 helical transmembrane spans lie at 7-24 (ALLL…GYLI) and 29-46 (GALI…FTYW). His130 serves as a coordination point for Zn(2+). Glu131 is an active-site residue. His134 provides a ligand contact to Zn(2+). The next 2 helical transmembrane spans lie at 145–165 (ITAT…FFGG) and 172–192 (GPGL…AMLV). Glu201 contacts Zn(2+). Over residues 288–305 (PASTFSRGAGTAASSGTP) the composition is skewed to polar residues. The tract at residues 288–324 (PASTFSRGAGTAASSGTPRGTGRSPWGGQPRGRGPWG) is disordered.

This sequence belongs to the peptidase M48B family. Zn(2+) serves as cofactor.

Its subcellular location is the cell inner membrane. The sequence is that of Protease HtpX homolog from Rhodopseudomonas palustris (strain TIE-1).